We begin with the raw amino-acid sequence, 638 residues long: Chaperone protein DnaK (638 aa).

Phosphothreonine; by autocatalysis is present on Thr197. A disordered region spans residues 598-638 (QQSAPSGAAAGPDEGAPSGSGGTSGTRGGDDVIDAEFTETK). Residues 615 to 624 (SGSGGTSGTR) are compositionally biased toward gly residues. Over residues 628–638 (DVIDAEFTETK) the composition is skewed to acidic residues.

The protein belongs to the heat shock protein 70 family.

Its function is as follows. Acts as a chaperone. The protein is Chaperone protein DnaK of Gloeobacter violaceus (strain ATCC 29082 / PCC 7421).